We begin with the raw amino-acid sequence, 205 residues long: Golgi apparatus membrane protein TVP23 homolog B (205 aa).

Residue M1 is modified to N-acetylmethionine. The tract at residues 1–21 (MLQQDSNDDTEDVSLFDAEEE) is disordered. 4 helical membrane-spanning segments follow: residues 34–53 (PVAS…VYLL), 54–72 (CELL…ILLL), 126–146 (IFWL…FSAL), and 152–172 (KWLA…YGYI).

The protein belongs to the TVP23 family.

The protein resides in the membrane. The sequence is that of Golgi apparatus membrane protein TVP23 homolog B (TVP23B) from Pongo abelii (Sumatran orangutan).